Here is a 429-residue protein sequence, read N- to C-terminus: Phosphoribosylamine--glycine ligase (429 aa).

An ATP-grasp domain is found at 109-316 (KDFLARHKIP…LVELCLKACD (208 aa)). 135–196 (LREKGTPIVV…EEFLDGEEAS (62 aa)) serves as a coordination point for ATP. 2 residues coordinate Mg(2+): Glu-286 and Asn-288.

It belongs to the GARS family. Mg(2+) is required as a cofactor. It depends on Mn(2+) as a cofactor.

It catalyses the reaction 5-phospho-beta-D-ribosylamine + glycine + ATP = N(1)-(5-phospho-beta-D-ribosyl)glycinamide + ADP + phosphate + H(+). It participates in purine metabolism; IMP biosynthesis via de novo pathway; N(1)-(5-phospho-D-ribosyl)glycinamide from 5-phospho-alpha-D-ribose 1-diphosphate: step 2/2. This Haemophilus influenzae (strain ATCC 51907 / DSM 11121 / KW20 / Rd) protein is Phosphoribosylamine--glycine ligase.